The sequence spans 295 residues: UTP--glucose-1-phosphate uridylyltransferase (295 aa).

The protein belongs to the UDPGP type 2 family.

The enzyme catalyses alpha-D-glucose 1-phosphate + UTP + H(+) = UDP-alpha-D-glucose + diphosphate. In terms of biological role, may play a role in stationary phase survival. The polypeptide is UTP--glucose-1-phosphate uridylyltransferase (galU) (Haemophilus influenzae (strain ATCC 51907 / DSM 11121 / KW20 / Rd)).